Reading from the N-terminus, the 1603-residue chain is Vitellogenin-5 (1603 aa).

Residues 1-15 form the signal peptide; the sequence is MKSIIIASLVALAIA. Positions 24-685 constitute a Vitellogenin domain; the sequence is FSPKSEYVYK…EKNAFLPKEV (662 aa). Positions 1306–1475 constitute a VWFD domain; that stretch reads ATCKVDQSEV…SYLLKNEECE (170 aa). Disulfide bonds link Cys1308-Cys1438 and Cys1330-Cys1474. The interval 1492-1513 is disordered; the sequence is NREEKKSDYESSSDYESNYDEK.

In terms of processing, vitellogenin 5 undergoes little if any processing before being packaged into yolk platelets. Expressed in the intestine of adult hermaphrodites.

The protein resides in the secreted. Its function is as follows. Precursor of the egg-yolk proteins that are sources of nutrients during embryonic development. Together with other vitellogenins, may play a role in modulating life-span, acting via induction of autophagy and lysosomal lipolysis. The sequence is that of Vitellogenin-5 (vit-5) from Caenorhabditis elegans.